We begin with the raw amino-acid sequence, 401 residues long: Ureide permease 4 (401 aa).

At 1–10 the chain is on the extracellular side; sequence MYVVESKAGA. Residues 11–31 traverse the membrane as a helical segment; the sequence is IGCMILSLCCLGSWPAILTLL. Residues 32–40 are Cytoplasmic-facing; the sequence is ERRGRLPQH. Residues 41-61 traverse the membrane as a helical segment; it reads TFLDFATANLLAAIVIAFSLG. Over 62–81 the chain is Extracellular; sequence EIGKSTFLKPDFTTQLPQDN. The chain crosses the membrane as a helical span at residues 82-102; the sequence is WPSVLLAVAGGVLLSIGNLAT. Residues 103–104 lie on the Cytoplasmic side of the membrane; that stretch reads QY. The chain crosses the membrane as a helical span at residues 105 to 125; sequence AFAFVGLSVTEVITASITVVI. Residues 126-141 lie on the Extracellular side of the membrane; sequence GTTLNYFLDNKINKAE. The helical transmembrane segment at 142 to 162 threads the bilayer; the sequence is ILFPGVGCFLIAVFLGAAVHA. Over 163-231 the chain is Cytoplasmic; it reads SNAADVKEKL…KRAIKVFGKS (69 aa). An ATP-binding site is contributed by 224–231; sequence AIKVFGKS. Residues 232-252 form a helical membrane-spanning segment; that stretch reads IMIGLFITLFAGISLSLFSPA. The Extracellular segment spans residues 253 to 275; that stretch reads FNLATNDQWSTLPKGVPKLVVYT. Residues 276–296 form a helical membrane-spanning segment; it reads AFFYFSIAGFLISLILNLIFL. Residues 297-318 lie on the Cytoplasmic side of the membrane; sequence YRPMVGLARSSLKKYIYDSKGR. The helical transmembrane segment at 319-339 threads the bilayer; it reads GWAVFAGFLCGFGNGLQFMGG. The Extracellular portion of the chain corresponds to 340–344; the sequence is QAAGY. The helical transmembrane segment at 345–365 threads the bilayer; that stretch reads AAADSVQALPLVSTFWGIVLF. Topologically, residues 366–374 are cytoplasmic; that stretch reads GEYRKSSKR. The helical transmembrane segment at 375–395 threads the bilayer; the sequence is TYALLVSMLAMFVAAVAILMA. Over 396 to 401 the chain is Extracellular; the sequence is SSGHRK.

Belongs to the plant ureide permease (TC 2.A.7.19) family. Expressed in developing seedlings, flower filaments and stigma, and the top and bottom parts of carpels in siliques.

It is found in the membrane. In terms of biological role, proton-coupled transporter that transports a wide spectrum of oxo derivatives of heterocyclic nitrogen compounds. In Arabidopsis thaliana (Mouse-ear cress), this protein is Ureide permease 4.